The sequence spans 464 residues: tRNA modification GTPase MnmE (464 aa).

(6S)-5-formyl-5,6,7,8-tetrahydrofolate is bound by residues R25, E87, and K130. Residues 226-386 (GLSVVLAGQP…LRAELLRIAG (161 aa)) enclose the TrmE-type G domain. N236 provides a ligand contact to K(+). GTP-binding positions include 236–241 (NVGKSS), 255–261 (TPIAGTT), and 280–283 (DTAG). Residue S240 participates in Mg(2+) binding. Residues T255, I257, and T260 each coordinate K(+). T261 is a binding site for Mg(2+). K464 provides a ligand contact to (6S)-5-formyl-5,6,7,8-tetrahydrofolate.

It belongs to the TRAFAC class TrmE-Era-EngA-EngB-Septin-like GTPase superfamily. TrmE GTPase family. As to quaternary structure, homodimer. Heterotetramer of two MnmE and two MnmG subunits. The cofactor is K(+).

The protein localises to the cytoplasm. Functionally, exhibits a very high intrinsic GTPase hydrolysis rate. Involved in the addition of a carboxymethylaminomethyl (cmnm) group at the wobble position (U34) of certain tRNAs, forming tRNA-cmnm(5)s(2)U34. The sequence is that of tRNA modification GTPase MnmE from Burkholderia orbicola (strain AU 1054).